The chain runs to 132 residues: uncharacterized protein (132 aa).

In terms of biological role, the presence of the two linear plasmids, termed pGKL1 and pGKL2, in strains of Kluyveromyces lactis confers the killer phenotype to the host cell, by promoting the secretion of a toxin able to inhibit the growth of sensitive strains. This is an uncharacterized protein from Kluyveromyces lactis (strain ATCC 8585 / CBS 2359 / DSM 70799 / NBRC 1267 / NRRL Y-1140 / WM37) (Yeast).